Here is a 117-residue protein sequence, read N- to C-terminus: Ribosome-binding factor A (117 aa).

Belongs to the RbfA family. Monomer. Binds 30S ribosomal subunits, but not 50S ribosomal subunits or 70S ribosomes.

The protein localises to the cytoplasm. Its function is as follows. One of several proteins that assist in the late maturation steps of the functional core of the 30S ribosomal subunit. Associates with free 30S ribosomal subunits (but not with 30S subunits that are part of 70S ribosomes or polysomes). Required for efficient processing of 16S rRNA. May interact with the 5'-terminal helix region of 16S rRNA. In Leptospira borgpetersenii serovar Hardjo-bovis (strain JB197), this protein is Ribosome-binding factor A.